Consider the following 877-residue polypeptide: Envelope glycoprotein gp160 (877 aa).

A signal peptide spans 1 to 19 (MKLTLLIGILLIGIGVVLN). Residues 20–707 (TRQQWVTVFY…SWFDFSKWLN (688 aa)) lie on the Extracellular side of the membrane. 22 N-linked (GlcNAc...) asparagine; by host glycosylation sites follow: N36, N69, N118, N135, N148, N158, N173, N204, N216, N258, N261, N272, N282, N288, N300, N312, N322, N379, N420, N431, N495, and N498. 5 disulfide bridges follow: C102–C224, C109–C215, C114–C174, C237–C267, and C247–C259. Positions 114-173 (CVELNSSEPTTTPKSTTASTTNITASTTTLPCVQNKTSTVLESCNETIIEKELNEEPASN) are V1. The V2 stretch occupies residues 174 to 215 (CTFAMAGYVRDQKKKYSVVWNDAEIMCKKGNNSNRECYMIHC). The tract at residues 317–349 (CKRPGNKTVLPVTIMAGLVFHSQRYNTRLRQAW) is V3. A disulfide bridge connects residues C317 and C350. Intrachain disulfides connect C402/C478 and C409/C451. The segment at 409 to 451 (CKMDWFLNYLNNRTVDPDHNPCNGTKGKGKAPGPCAQRTYVAC) is V4. A V5 region spans residues 494 to 501 (KNRTNVTL). The segment at 544–564 (VPFVLGFLGFLGAAGTAMGAA) is fusion peptide. The interval 607–623 (LNARVTALEKYLEDQAR) is immunosuppression. Residues N652 and N668 are each glycosylated (N-linked (GlcNAc...) asparagine; by host). The stretch at 668-692 (NITTQLEEARAQEEKNLDAYQKLSS) forms a coiled coil. The tract at residues 689–710 (KLSSWSDFWSWFDFSKWLNILK) is MPER; binding to GalCer. A helical transmembrane segment spans residues 708–728 (ILKIGFLDVLGIIGLRLLYTV). Residues 729-877 (YSCIARVRQG…VRQGLEGILN (149 aa)) lie on the Cytoplasmic side of the membrane. Positions 739–742 (YSPL) match the YXXL motif; contains endocytosis signal motif. Positions 751–779 (WKGQPDNAEGPGEGGDKRKNSSEPWQKES) are disordered.

As to quaternary structure, the mature envelope protein (Env) consists of a homotrimer of non-covalently associated gp120-gp41 heterodimers. The resulting complex protrudes from the virus surface as a spike. Interacts with host CD4 and CCR5. Gp120 also interacts with the C-type lectins CD209/DC-SIGN and CLEC4M/DC-SIGNR (collectively referred to as DC-SIGN(R)). The mature envelope protein (Env) consists of a homotrimer of non-covalently associated gp120-gp41 heterodimers. The resulting complex protrudes from the virus surface as a spike. Specific enzymatic cleavages in vivo yield mature proteins. Envelope glycoproteins are synthesized as an inactive precursor that is heavily N-glycosylated and processed likely by host cell furin in the Golgi to yield the mature SU and TM proteins. The cleavage site between SU and TM requires the minimal sequence [KR]-X-[KR]-R.

It localises to the virion membrane. The protein localises to the host cell membrane. The protein resides in the host endosome membrane. Functionally, the surface protein gp120 (SU) attaches the virus to the host lymphoid cell by binding to the primary receptor CD4. This interaction induces a structural rearrangement creating a high affinity binding site for a chemokine coreceptor like CCR5. This peculiar 2 stage receptor-interaction strategy allows gp120 to maintain the highly conserved coreceptor-binding site in a cryptic conformation, protected from neutralizing antibodies. These changes are transmitted to the transmembrane protein gp41 and are thought to activate its fusogenic potential by unmasking its fusion peptide. In terms of biological role, surface protein gp120 (SU) may target the virus to gut-associated lymphoid tissue (GALT) by binding host ITGA4/ITGB7 (alpha-4/beta-7 integrins), a complex that mediates T-cell migration to the GALT. Interaction between gp120 and ITGA4/ITGB7 would allow the virus to enter GALT early in the infection, infecting and killing most of GALT's resting CD4+ T-cells. This T-cell depletion is believed to be the major insult to the host immune system leading to AIDS. The surface protein gp120 is a ligand for CD209/DC-SIGN and CLEC4M/DC-SIGNR, which are respectively found on dendritic cells (DCs), and on endothelial cells of liver sinusoids and lymph node sinuses. These interactions allow capture of viral particles at mucosal surfaces by these cells and subsequent transmission to permissive cells. DCs are professional antigen presenting cells, critical for host immunity by inducing specific immune responses against a broad variety of pathogens. They act as sentinels in various tissues where they take up antigen, process it, and present it to T-cells following migration to lymphoid organs. SIV subverts the migration properties of dendritic cells to gain access to CD4+ T-cells in lymph nodes. Virus transmission to permissive T-cells occurs either in trans (without DCs infection, through viral capture and transmission), or in cis (following DCs productive infection, through the usual CD4-gp120 interaction), thereby inducing a robust infection. In trans infection, bound virions remain infectious over days and it is proposed that they are not degraded, but protected in non-lysosomal acidic organelles within the DCs close to the cell membrane thus contributing to the viral infectious potential during DCs' migration from the periphery to the lymphoid tissues. On arrival at lymphoid tissues, intact virions recycle back to DCs' cell surface allowing virus transmission to CD4+ T-cells. Virion capture also seems to lead to MHC-II-restricted viral antigen presentation, and probably to the activation of SIV-specific CD4+ cells. Its function is as follows. The transmembrane protein gp41 (TM) acts as a class I viral fusion protein. Under the current model, the protein has at least 3 conformational states: pre-fusion native state, pre-hairpin intermediate state, and post-fusion hairpin state. During fusion of viral and target intracellular membranes, the coiled coil regions (heptad repeats) assume a trimer-of-hairpins structure, positioning the fusion peptide in close proximity to the C-terminal region of the ectodomain. The formation of this structure appears to drive apposition and subsequent fusion of viral and target cell membranes. Complete fusion occurs in host cell endosomes. The virus undergoes clathrin-dependent internalization long before endosomal fusion, thus minimizing the surface exposure of conserved viral epitopes during fusion and reducing the efficacy of inhibitors targeting these epitopes. Membranes fusion leads to delivery of the nucleocapsid into the cytoplasm. Functionally, the envelope glycoprotein gp160 precursor down-modulates cell surface CD4 antigen by interacting with it in the endoplasmic reticulum and blocking its transport to the cell surface. In terms of biological role, the gp120-gp41 heterodimer allows rapid transcytosis of the virus through CD4 negative cells such as simple epithelial monolayers of the intestinal, rectal and endocervical epithelial barriers. Both gp120 and gp41 specifically recognize glycosphingolipids galactosyl-ceramide (GalCer) or 3' sulfo-galactosyl-ceramide (GalS) present in the lipid rafts structures of epithelial cells. Binding to these alternative receptors allows the rapid transcytosis of the virus through the epithelial cells. This transcytotic vesicle-mediated transport of virions from the apical side to the basolateral side of the epithelial cells does not involve infection of the cells themselves. The polypeptide is Envelope glycoprotein gp160 (env) (Cercopithecidae (Old World monkeys)).